The following is a 652-amino-acid chain: 2-oxoglutarate carboxylase large subunit (652 aa).

In terms of domain architecture, Pyruvate carboxyltransferase spans 26–288 (ILITDLTPRD…DTGIDMKKLD (263 aa)). Residues 34-38 (RDGQQ) and Arg105 each bind substrate. Asp35 serves as a coordination point for a divalent metal cation. Residues Lys196, His227, and His229 each coordinate a divalent metal cation. Position 196 is an N6-carboxylysine (Lys196). Residue Thr362 coordinates substrate. One can recognise a Biotinyl-binding domain in the interval 563–643 (AEEKGIPKAT…TPDDALLRIK (81 aa)). Position 609 is an N6-biotinyllysine (Lys609).

As to quaternary structure, heterohexadecamer of 8 large subunits and 8 small subunits. The cofactor is Mg(2+). Requires Mn(2+) as cofactor. Co(2+) serves as cofactor. Post-translationally, biotinylated.

The enzyme catalyses hydrogencarbonate + 2-oxoglutarate + ATP = (S)-oxalosuccinate + ADP + phosphate + H(+). This chain is 2-oxoglutarate carboxylase large subunit, found in Hydrogenobacter thermophilus (strain DSM 6534 / IAM 12695 / TK-6).